We begin with the raw amino-acid sequence, 2397 residues long: Cell wall alpha-1,3-glucan synthase mok11 (2397 aa).

A disordered region spans residues 1683–1705; that stretch reads SNQQSFDFKSSESDSFPQKSPSV. Residues 1687-1698 are compositionally biased toward low complexity; that stretch reads SFDFKSSESDSF.

Belongs to the glycosyltransferase group 1 family.

It carries out the reaction [(1-&gt;3)-alpha-D-glucosyl](n) + UDP-alpha-D-glucose = [(1-&gt;3)-alpha-D-glucosyl](n+1) + UDP + H(+). The polypeptide is Cell wall alpha-1,3-glucan synthase mok11 (mok11) (Schizosaccharomyces pombe (strain 972 / ATCC 24843) (Fission yeast)).